A 667-amino-acid polypeptide reads, in one-letter code: UvrABC system protein B (667 aa).

One can recognise a Helicase ATP-binding domain in the interval 28–185 (NNFKQGLKEQ…NKLIELKYQR (158 aa)). ATP is bound at residue 41–48 (GATGTGKT). Positions 94–117 (YYDYYQPEAYVASSDTYIEKDSKI) match the Beta-hairpin motif. The region spanning 432-594 (QMDDLYFEIK…VTPTALNKTI (163 aa)) is the Helicase C-terminal domain. The region spanning 629–664 (NKEIKRLQKTMKEAAKALDFEKAATLRDLILDLEKK) is the UVR domain.

The protein belongs to the UvrB family. Forms a heterotetramer with UvrA during the search for lesions. Interacts with UvrC in an incision complex.

It is found in the cytoplasm. Functionally, the UvrABC repair system catalyzes the recognition and processing of DNA lesions. A damage recognition complex composed of 2 UvrA and 2 UvrB subunits scans DNA for abnormalities. Upon binding of the UvrA(2)B(2) complex to a putative damaged site, the DNA wraps around one UvrB monomer. DNA wrap is dependent on ATP binding by UvrB and probably causes local melting of the DNA helix, facilitating insertion of UvrB beta-hairpin between the DNA strands. Then UvrB probes one DNA strand for the presence of a lesion. If a lesion is found the UvrA subunits dissociate and the UvrB-DNA preincision complex is formed. This complex is subsequently bound by UvrC and the second UvrB is released. If no lesion is found, the DNA wraps around the other UvrB subunit that will check the other stand for damage. The protein is UvrABC system protein B of Aster yellows witches'-broom phytoplasma (strain AYWB).